The sequence spans 565 residues: Arginine--tRNA ligase (565 aa).

The 'HIGH' region motif lies at A128–H138.

Belongs to the class-I aminoacyl-tRNA synthetase family. As to quaternary structure, monomer.

The protein resides in the cytoplasm. The enzyme catalyses tRNA(Arg) + L-arginine + ATP = L-arginyl-tRNA(Arg) + AMP + diphosphate. This chain is Arginine--tRNA ligase, found in Delftia acidovorans (strain DSM 14801 / SPH-1).